We begin with the raw amino-acid sequence, 2748 residues long: Nuclear migration protein NUM1 (2748 aa).

A compositionally biased stretch (basic residues) spans 1–10 (MSHNNRHKKN). Disordered regions lie at residues 1-36 (MSHN…VSTN) and 290-312 (YYQK…GTTS). The segment covering 17–36 (AGQYANSIDNSLSQESVSTN) has biased composition (polar residues). Residues 293-304 (KQHTSDTTVTSD) are compositionally biased toward low complexity. Tandem repeats lie at residues 593–656 (PSLE…KLEQ), 657–727 (PSLE…EVEQ), 728–798 (PSLA…EVEQ), 799–862 (PSLA…KLEQ), 863–926 (PSLA…KLEQ), 927–990 (PSLA…KLEQ), 991–1054 (PSLE…KLEQ), 1055–1118 (PSLE…KLEQ), 1119–1182 (PSLE…KLEQ), 1183–1246 (PSLA…KLEQ), 1247–1310 (PSLA…KLEQ), and 1311–1374 (PSLE…KLEQ). Residues 593–1384 (PSLEYLVEHA…PSLEYLVKHA (792 aa)) are 13 X tandem repeats. Phosphoserine is present on residues serine 611, serine 675, and serine 746. Residues serine 881, serine 945, and serine 1009 each carry the phosphoserine modification. Phosphoserine is present on residues serine 1201, serine 1265, and serine 1329. The 13; truncated repeat unit spans residues 1375–1384 (PSLEYLVKHA). A disordered region spans residues 2111-2133 (ERAERIDEQSINTTSSNSTTTSS). Residues 2122–2133 (NTTSSNSTTTSS) are compositionally biased toward low complexity. Phosphoserine occurs at positions 2162, 2164, 2197, 2217, 2220, 2221, 2360, and 2424. Residues 2444-2460 (KEDKKGQATASKHEYVS) are compositionally biased toward basic and acidic residues. A disordered region spans residues 2444–2536 (KEDKKGQATA…HSSRNTPASR (93 aa)). The segment covering 2465–2474 (NKTSTVSTKS) has biased composition (polar residues). Positions 2492–2503 (SESHPQIEEQSH) are enriched in basic and acidic residues. Phosphoserine is present on serine 2494. Basic residues predominate over residues 2504 to 2514 (RTNHHKHHKRQ). The segment covering 2516 to 2532 (SLNSNSTSKTTHSSRNT) has biased composition (low complexity). Serine 2545 carries the phosphoserine modification. The 111-residue stretch at 2573–2683 (QTVIGEYLFK…WYNSLRYLLQ (111 aa)) folds into the PH domain. Residues 2707-2748 (IFPLPGENTKSSSKRLSASRRSVSTRSLRHRVPQSRSFGNLR) form a disordered region. Residues 2720–2730 (KRLSASRRSVS) show a composition bias toward low complexity.

Interacts with PAC11 when DYN1 is present, and TUB3.

The protein localises to the bud tip. Its function is as follows. Controls nuclear migration. NUM1 specifically controls the interaction of the bud neck cytoskeleton with the pre-divisional G2 nucleus. Functions in dynein-anchoring. During late anaphase forms dynein-interacting cortical microtubule capture sites at both cellular poles. This leads to dynein-dependent sliding of the microtubules in the bud. This is Nuclear migration protein NUM1 (NUM1) from Saccharomyces cerevisiae (strain ATCC 204508 / S288c) (Baker's yeast).